The chain runs to 533 residues: Calcium/calmodulin-dependent protein kinase type II subunit delta (533 aa).

Alanine 2 is modified (N-acetylalanine). One can recognise a Protein kinase domain in the interval 14–272; it reads YQLFEELGKG…ASEALKHPWI (259 aa). ATP-binding positions include 20-28 and lysine 43; that span reads LGKGAFSVV. Aspartate 136 serves as the catalytic Proton acceptor. The interval 283 to 292 is autoinhibitory domain; that stretch reads HRQETVDCLK. Threonine 287 is modified (phosphothreonine; by autocatalysis). Positions 291–301 are calmodulin-binding; that stretch reads LKKFNARRKLK. Phosphothreonine; by autocatalysis occurs at positions 306 and 307. Serine 315 bears the Phosphoserine mark. Position 318 is an N6-acetyllysine (lysine 318). A phosphoserine mark is found at serine 319 and serine 364. The disordered stretch occupies residues 337-375; sequence TSPKENIPTPALEPQTTVIHNPDGNKESTESSNTTIEDE. The residue at position 365 (threonine 365) is a Phosphothreonine. Position 367 is a phosphoserine (serine 367). Threonine 370 and threonine 371 each carry phosphothreonine. 3 positions are modified to phosphoserine: serine 438, serine 524, and serine 528.

It belongs to the protein kinase superfamily. CAMK Ser/Thr protein kinase family. CaMK subfamily. CAMK2 is composed of 4 different chains: alpha (CAMK2A), beta (CAMK2B), gamma (CAMK2G), and delta (CAMK2D). The different isoforms assemble into homo- or heteromultimeric holoenzymes composed of 12 subunits with two hexameric rings stacked one on top of the other. Interacts with RRAD and CACNB2. Post-translationally, autophosphorylation of Thr-287 following activation by Ca(2+)/calmodulin. Phosphorylation of Thr-287 locks the kinase into an activated state. In terms of tissue distribution, expressed in liver.

It localises to the cell membrane. The protein localises to the sarcolemma. Its subcellular location is the sarcoplasmic reticulum membrane. It catalyses the reaction L-seryl-[protein] + ATP = O-phospho-L-seryl-[protein] + ADP + H(+). It carries out the reaction L-threonyl-[protein] + ATP = O-phospho-L-threonyl-[protein] + ADP + H(+). Activated by Ca(2+)/calmodulin. Binding of calmodulin results in conformational change that relieves intrasteric autoinhibition and allows autophosphorylation of Thr-287 which turns the kinase in a constitutively active form and confers to the kinase a Ca(2+)-independent activity. Its function is as follows. Calcium/calmodulin-dependent protein kinase involved in the regulation of Ca(2+) homeostatis and excitation-contraction coupling (ECC) in heart by targeting ion channels, transporters and accessory proteins involved in Ca(2+) influx into the myocyte, Ca(2+) release from the sarcoplasmic reticulum (SR), SR Ca(2+) uptake and Na(+) and K(+) channel transport. Targets also transcription factors and signaling molecules to regulate heart function. In its activated form, is involved in the pathogenesis of dilated cardiomyopathy and heart failure. Contributes to cardiac decompensation and heart failure by regulating SR Ca(2+) release via direct phosphorylation of RYR2 Ca(2+) channel on 'Ser-2808'. In the nucleus, phosphorylates the MEF2 repressor HDAC4, promoting its nuclear export and binding to 14-3-3 protein, and expression of MEF2 and genes involved in the hypertrophic program. Is essential for left ventricular remodeling responses to myocardial infarction. In pathological myocardial remodeling acts downstream of the beta adrenergic receptor signaling cascade to regulate key proteins involved in ECC. Regulates Ca(2+) influx to myocytes by binding and phosphorylating the L-type Ca(2+) channel subunit beta-2 CACNB2. In addition to Ca(2+) channels, can target and regulate the cardiac sarcolemmal Na(+) channel Nav1.5/SCN5A and the K+ channel Kv4.3/KCND3, which contribute to arrhythmogenesis in heart failure. Phosphorylates phospholamban (PLN/PLB), an endogenous inhibitor of SERCA2A/ATP2A2, contributing to the enhancement of SR Ca(2+) uptake that may be important in frequency-dependent acceleration of relaxation (FDAR) and maintenance of contractile function during acidosis. May participate in the modulation of skeletal muscle function in response to exercise, by regulating SR Ca(2+) transport through phosphorylation of PLN/PLB and triadin, a ryanodine receptor-coupling factor. In response to interferon-gamma (IFN-gamma) stimulation, catalyzes phosphorylation of STAT1, stimulating the JAK-STAT signaling pathway. In Oryctolagus cuniculus (Rabbit), this protein is Calcium/calmodulin-dependent protein kinase type II subunit delta (CAMK2D).